A 647-amino-acid polypeptide reads, in one-letter code: Protein RAD61 (647 aa).

The interval 1–90 is disordered; the sequence is MRAYGKRGPV…QLDSKRNDQN (90 aa). The segment covering 66 to 82 has biased composition (polar residues); it reads DSSSSFDGANEKPSSQL.

It localises to the nucleus. Functionally, involved in resistance to ionizing radiation. This is Protein RAD61 (RAD61) from Saccharomyces cerevisiae (strain ATCC 204508 / S288c) (Baker's yeast).